We begin with the raw amino-acid sequence, 214 residues long: Small ribosomal subunit protein uS5 (214 aa).

Residues 54–117 (LKYEVMDIKI…KNAKMNIIPV (64 aa)) enclose the S5 DRBM domain.

The protein belongs to the universal ribosomal protein uS5 family. As to quaternary structure, part of the 30S ribosomal subunit. Contacts protein S4.

Functionally, with S4 and S12 plays an important role in translational accuracy. This Sulfurisphaera tokodaii (strain DSM 16993 / JCM 10545 / NBRC 100140 / 7) (Sulfolobus tokodaii) protein is Small ribosomal subunit protein uS5.